The primary structure comprises 751 residues: MAVLALHAVFGIFIYFSSVKGSSQPQARVFLTFNELQETKTSEYHRISHSPLDYRILLMDEDQDRIYVGSKDHILSLNINNISQDPLSIFWPASANKVEECKMAGKDPTHGCGNFVRVIQSYNRTHLYVCGSGAFSPVCVYVNRGRRSEEQIFKIDSKCESGKGRCSFNPNVNTVSVMINEELFSGMYIDFMGTDAAIFRSLTKRNAVRTDQHNSKWLSEPIFVDAHVIPDGTDPNDAKIYFFFKERLTDNSGSTKQIHSMIARICPNDTGGQRSLVNKWTTFLKARLVCSVMDEDGTETYFDELEDVFLLETDNPRTTLVYGIFTTSSSIFKGSAVCVYHLSDIQTVFNGPFAHKEGPNHQLIPYQGRIPYPRPGTCPGGAFTPNMRTTKEFPDDVVTFIRNHPLMYNPIYPIHKRPLIIRIGTDYKYTKIAVDRVNAADGRCHVLFLGTDQGTVQKVVVLPTNFSASGELILEELEVFQSNSPITTMKISSKKQQLYVSSEEGVTQVPLHRCRIYGTACADCCLARDPYCAWDGNSCSRFYPTGKRRSRRQDVRHGNPLTQCRGFNLKAYRNAAETVQYGVKNNTTFLECTPKSPQASIKWLLQKDNDRRKEVKLSERIIATEQGLLIRSVQDSDRGLYHCIATENNFKQTLAKINFKVLDTEMVAYMTDKWSPWTWASSVRALQFHPKDFVGAFSHSEMQMINQYCKDSRQQGQRREEPQKMRGDYSKLKALINSRKSRNRRNQLPAS.

The first 21 residues, 1–21, serve as a signal peptide directing secretion; it reads MAVLALHAVFGIFIYFSSVKG. Residues 28 to 511 form the Sema domain; it reads RVFLTFNELQ…SEEGVTQVPL (484 aa). Asn81 carries N-linked (GlcNAc...) asparagine glycosylation. A disulfide bridge connects residues Cys101 and Cys112. Asn123 carries an N-linked (GlcNAc...) asparagine glycan. 3 disulfides stabilise this stretch: Cys130-Cys139, Cys266-Cys378, and Cys290-Cys338. Asn268 is a glycosylation site (N-linked (GlcNAc...) asparagine). N-linked (GlcNAc...) asparagine glycosylation occurs at Asn465. A disulfide bond links Cys514 and Cys532. The 85-residue stretch at 571–655 folds into the Ig-like C2-type domain; it reads AYRNAAETVQ…TENNFKQTLA (85 aa). N-linked (GlcNAc...) asparagine glycans are attached at residues Asn585 and Asn586. A disulfide bridge links Cys643 with Cys709. A compositionally biased stretch (basic and acidic residues) spans 712–731; that stretch reads SRQQGQRREEPQKMRGDYSK. A disordered region spans residues 712–751; that stretch reads SRQQGQRREEPQKMRGDYSKLKALINSRKSRNRRNQLPAS.

It belongs to the semaphorin family. Collapsin-1, -2, -3, and -5 bind to overlapping but distinct axon tracts.

It localises to the secreted. Functionally, induces the collapse and paralysis of neuronal growth cones. Could potentially act as repulsive cues toward specific neuronal populations. Binds to neuropilin. The sequence is that of Semaphorin-3C (SEMA3C) from Gallus gallus (Chicken).